The sequence spans 548 residues: 4-coumarate--CoA ligase CCL1 (548 aa).

ATP-binding positions include 195 to 203 (SSGTTGLPK), 337 to 342 (QGYGMT), D426, 438 to 441 (IVDR), and K532. The tract at residues 268–337 (EISKLLELIE…EKLPHAKLGQ (70 aa)) is SBD1. Residues 338-405 (GYGMTEAGPV…IRGKQIMKGY (68 aa)) are SBD2.

The protein belongs to the ATP-dependent AMP-binding enzyme family. In terms of tissue distribution, mostly expressed in glandular trichomes (lupulin glands) after flowering, and, to a lower extent, in stems, leaves, cones and flowers.

The protein localises to the cytoplasm. It catalyses the reaction (E)-4-coumarate + ATP + CoA = (E)-4-coumaroyl-CoA + AMP + diphosphate. Its pathway is secondary metabolite biosynthesis. In terms of biological role, involved in the biosynthesis of prenylated phenolics natural products which contribute to the bitter taste of beer and display broad biological activities. Catalyzes the ligation of CoA on (E)-4-coumarate to produce (E)-4-coumaroyl-CoA. This is 4-coumarate--CoA ligase CCL1 from Humulus lupulus (European hop).